Consider the following 276-residue polypeptide: Carboxysome assembly protein CcmO (276 aa).

BMC domains follow at residues 16–100 (ALGV…AVLP) and 120–204 (AIGL…DSLP). Disordered regions lie at residues 200–219 (MDSL…LQLP) and 252–276 (QSAL…RDDQ).

The protein belongs to the bacterial microcompartments protein family. As to quaternary structure, homooligomerizes, possibly as a trimer, interacts with CcmK2 in the carboxysome.

The protein localises to the carboxysome. Its function is as follows. Required for formation of the carboxysome, a polyhedral inclusion where RuBisCO (ribulose bisphosphate carboxylase, rbcL-rbcS) is sequestered. Required for recruitment of major shell protein CcmK2 to the pre-carboxysome. Suggested to be a carboxysome shell protein, but it is not detected in gels, mass spectrometry or by protein sequencing. In terms of biological role, beta-carboxysome assembly initiates when soluble RuBisCO is condensed into a liquid matrix in a pre-carboxysome by the RbcS-like domains of probably both CcmM58 and CcmM35. CcmN interacts with the N-terminus of CcmM58, and then recruits the CcmK2 major shell protein via CcmN's encapsulation peptide. Shell formation requires CcmK proteins and CcmO. CcmL caps the otherwise elongated carboxysome. Once fully encapsulated carboxysomes are formed, they migrate within the cell probably via interactions with the cytoskeleton. This Synechococcus elongatus (strain ATCC 33912 / PCC 7942 / FACHB-805) (Anacystis nidulans R2) protein is Carboxysome assembly protein CcmO.